The following is a 379-amino-acid chain: 3-dehydroquinate synthase (379 aa).

NAD(+)-binding positions include 67-72 (PGEKNK), 101-105 (GIVLD), 125-126 (TT), Lys-138, and Lys-147. Residues Glu-180, His-242, and His-258 each contribute to the Zn(2+) site.

The protein belongs to the sugar phosphate cyclases superfamily. Dehydroquinate synthase family. NAD(+) is required as a cofactor. The cofactor is Co(2+). Zn(2+) serves as cofactor.

Its subcellular location is the cytoplasm. The catalysed reaction is 7-phospho-2-dehydro-3-deoxy-D-arabino-heptonate = 3-dehydroquinate + phosphate. It functions in the pathway metabolic intermediate biosynthesis; chorismate biosynthesis; chorismate from D-erythrose 4-phosphate and phosphoenolpyruvate: step 2/7. In terms of biological role, catalyzes the conversion of 3-deoxy-D-arabino-heptulosonate 7-phosphate (DAHP) to dehydroquinate (DHQ). In Chlamydia felis (strain Fe/C-56) (Chlamydophila felis), this protein is 3-dehydroquinate synthase.